The sequence spans 439 residues: GTPase Der (439 aa).

EngA-type G domains lie at 2–168 and 181–357; these read ATVL…EEKG and IKIA…SSYT. GTP-binding positions include 8–15, 55–59, 118–121, 187–194, 234–238, and 300–303; these read GKPNVGKS, DTCGV, NKTE, GRPNVGKS, DTAGL, and NKWD. The KH-like domain occupies 358–439; that stretch reads TKVPSSALNS…PIFLKFKKSR (82 aa).

This sequence belongs to the TRAFAC class TrmE-Era-EngA-EngB-Septin-like GTPase superfamily. EngA (Der) GTPase family. Associates with the 50S ribosomal subunit.

Its function is as follows. GTPase that plays an essential role in the late steps of ribosome biogenesis. The polypeptide is GTPase Der (Thermotoga neapolitana (strain ATCC 49049 / DSM 4359 / NBRC 107923 / NS-E)).